Consider the following 303-residue polypeptide: Mitochondrial carrier homolog 2 (303 aa).

At A2 the chain carries N-acetylalanine. At 2–15 (ADAASQVLLGSGLT) the chain is on the mitochondrial intermembrane side. 2 Solcar repeats span residues 2 to 98 (ADAA…YQEC) and 118 to 206 (DRVI…VNTY). A helical transmembrane segment spans residues 16-36 (ILSQPLMYVKVLIQVGYEPLA). Over 37 to 77 (PTVGRNIFGRQVCQLPGLFCYAQHIASIDGKRGLFTGLTPR) the chain is Cytoplasmic. Residues 78-92 (LCSGVLGTVVHGKVL) form a helical membrane-spanning segment. The Mitochondrial intermembrane portion of the chain corresponds to 93-135 (QHYQECDKAEESGSGNVQKEVSSSFDRVIKETTREMMARSAAT). Residues 136–156 (LITHPFHVITLRSMVQFIGRE) form a helical membrane-spanning segment. At 157–180 (SKYCGLCDSIATIYREEGILGFFA) the chain is on the cytoplasmic side. A helical transmembrane segment spans residues 181–199 (GLIPRLLGDIISLWLCNSL). Topologically, residues 200-231 (AYLVNTYALDSGVSTMNEMKSYSQAVTGFFAS) are mitochondrial intermembrane. The chain crosses the membrane as a helical span at residues 232-252 (MLTYPFVLVSNLMAVNNCGLA). Topologically, residues 253 to 280 (GGCPPYAPIYSSWIDCWCMLQKEGNMSR) are cytoplasmic. The chain crosses the membrane as a helical span at residues 281-303 (GNSLFFRKVPFGKTYCCDLRMLI).

This sequence belongs to the mitochondrial carrier (TC 2.A.29) family. In terms of assembly, interacts with p15BID.

It localises to the mitochondrion outer membrane. Functionally, protein insertase that mediates insertion of transmembrane proteins into the mitochondrial outer membrane. Catalyzes insertion of proteins with alpha-helical transmembrane regions, such as signal-anchored, tail-anchored and multi-pass membrane proteins. Does not mediate insertion of beta-barrel transmembrane proteins. Also acts as a receptor for the truncated form of pro-apoptotic BH3-interacting domain death agonist (p15 BID) and has therefore a critical function in apoptosis. Regulates the quiescence/cycling of hematopoietic stem cells (HSCs). Acts as a regulator of mitochondrial fusion, essential for the naive-to-primed interconversion of embryonic stem cells (ESCs). Acts as a regulator of lipid homeostasis and has a regulatory role in adipocyte differentiation and biology. This Bos taurus (Bovine) protein is Mitochondrial carrier homolog 2 (MTCH2).